The primary structure comprises 396 residues: Flap endonuclease 1 (396 aa).

Residues 1 to 105 (MGIHGLTKLL…DQLAQRTERR (105 aa)) form an N-domain region. Asp34 provides a ligand contact to Mg(2+). DNA is bound at residue Arg71. Residues Asp87, Glu159, Glu161, Asp180, and Asp182 each coordinate Mg(2+). An I-domain region spans residues 123 to 254 (AIEKYSKRSV…VRALQMIKKH (132 aa)). Glu159 is a binding site for DNA. DNA contacts are provided by Gly232 and Asp234. Asp234 lines the Mg(2+) pocket. An interaction with PCNA region spans residues 338 to 346 (NQGRLESFF). A disordered region spans residues 341-396 (RLESFFTSLPKPATADKAKPKEDDKKRKAGAAAGGKDAKGGAAAKKGKFGVGGGKK). Residues 354–366 (TADKAKPKEDDKK) are compositionally biased toward basic and acidic residues. Positions 370–384 (GAAAGGKDAKGGAAA) are enriched in low complexity.

This sequence belongs to the XPG/RAD2 endonuclease family. FEN1 subfamily. Interacts with PCNA. Three molecules of FEN1 bind to one PCNA trimer with each molecule binding to one PCNA monomer. PCNA stimulates the nuclease activity without altering cleavage specificity. The cofactor is Mg(2+). Phosphorylated. Phosphorylation upon DNA damage induces relocalization to the nuclear plasma.

It is found in the nucleus. Its subcellular location is the nucleolus. It localises to the nucleoplasm. The protein resides in the mitochondrion. In terms of biological role, structure-specific nuclease with 5'-flap endonuclease and 5'-3' exonuclease activities involved in DNA replication and repair. During DNA replication, cleaves the 5'-overhanging flap structure that is generated by displacement synthesis when DNA polymerase encounters the 5'-end of a downstream Okazaki fragment. It enters the flap from the 5'-end and then tracks to cleave the flap base, leaving a nick for ligation. Also involved in the long patch base excision repair (LP-BER) pathway, by cleaving within the apurinic/apyrimidinic (AP) site-terminated flap. Acts as a genome stabilization factor that prevents flaps from equilibrating into structures that lead to duplications and deletions. Also possesses 5'-3' exonuclease activity on nicked or gapped double-stranded DNA, and exhibits RNase H activity. Also involved in replication and repair of rDNA and in repairing mitochondrial DNA. This is Flap endonuclease 1 from Chlamydomonas reinhardtii (Chlamydomonas smithii).